A 551-amino-acid chain; its full sequence is Hydroxylamine reductase (551 aa).

Positions 3, 6, 18, and 25 each coordinate [2Fe-2S] cluster. His249, Glu273, Cys317, Cys405, Cys433, Cys459, Glu493, and Lys495 together coordinate hybrid [4Fe-2O-2S] cluster. Cysteine persulfide is present on Cys405.

It belongs to the HCP family. Requires [2Fe-2S] cluster as cofactor. The cofactor is hybrid [4Fe-2O-2S] cluster.

The protein localises to the cytoplasm. It carries out the reaction A + NH4(+) + H2O = hydroxylamine + AH2 + H(+). In terms of biological role, catalyzes the reduction of hydroxylamine to form NH(3) and H(2)O. The polypeptide is Hydroxylamine reductase (Actinobacillus pleuropneumoniae serotype 5b (strain L20)).